We begin with the raw amino-acid sequence, 643 residues long: Threonine--tRNA ligase (643 aa).

Residues 1-61 enclose the TGS domain; sequence MPIITLPDGA…SVNANINIIT (61 aa). The tract at residues 242–533 is catalytic; sequence DHRKIGKKLD…LIEEYEGKFP (292 aa). Zn(2+) is bound by residues Cys333, His384, and His510.

It belongs to the class-II aminoacyl-tRNA synthetase family. Homodimer. Zn(2+) is required as a cofactor.

The protein resides in the cytoplasm. The enzyme catalyses tRNA(Thr) + L-threonine + ATP = L-threonyl-tRNA(Thr) + AMP + diphosphate + H(+). In terms of biological role, catalyzes the attachment of threonine to tRNA(Thr) in a two-step reaction: L-threonine is first activated by ATP to form Thr-AMP and then transferred to the acceptor end of tRNA(Thr). Also edits incorrectly charged L-seryl-tRNA(Thr). This chain is Threonine--tRNA ligase, found in Prochlorococcus marinus (strain SARG / CCMP1375 / SS120).